A 239-amino-acid chain; its full sequence is Phosphoribosylaminoimidazole-succinocarboxamide synthase (239 aa).

Belongs to the SAICAR synthetase family.

The enzyme catalyses 5-amino-1-(5-phospho-D-ribosyl)imidazole-4-carboxylate + L-aspartate + ATP = (2S)-2-[5-amino-1-(5-phospho-beta-D-ribosyl)imidazole-4-carboxamido]succinate + ADP + phosphate + 2 H(+). The protein operates within purine metabolism; IMP biosynthesis via de novo pathway; 5-amino-1-(5-phospho-D-ribosyl)imidazole-4-carboxamide from 5-amino-1-(5-phospho-D-ribosyl)imidazole-4-carboxylate: step 1/2. This Bacillus cereus (strain AH187) protein is Phosphoribosylaminoimidazole-succinocarboxamide synthase.